The sequence spans 332 residues: Fructose-1,6-bisphosphatase class 1 (332 aa).

4 residues coordinate Mg(2+): Glu92, Asp113, Leu115, and Asp116. Substrate-binding positions include Asp116–Ser119, Asn209, Tyr242, and Lys272. Glu278 lines the Mg(2+) pocket.

The protein belongs to the FBPase class 1 family. In terms of assembly, homotetramer. The cofactor is Mg(2+).

The protein resides in the cytoplasm. It carries out the reaction beta-D-fructose 1,6-bisphosphate + H2O = beta-D-fructose 6-phosphate + phosphate. It functions in the pathway carbohydrate biosynthesis; Calvin cycle. This Prosthecochloris aestuarii (strain DSM 271 / SK 413) protein is Fructose-1,6-bisphosphatase class 1.